Consider the following 562-residue polypeptide: Probable Xaa-Pro aminopeptidase PEPP (562 aa).

Mn(2+) contacts are provided by aspartate 358, aspartate 369, glutamate 492, and glutamate 532.

This sequence belongs to the peptidase M24B family. Mn(2+) serves as cofactor.

It carries out the reaction Release of any N-terminal amino acid, including proline, that is linked to proline, even from a dipeptide or tripeptide.. Catalyzes the removal of a penultimate prolyl residue from the N-termini of peptides. This chain is Probable Xaa-Pro aminopeptidase PEPP (PEPP), found in Leptosphaeria maculans (strain JN3 / isolate v23.1.3 / race Av1-4-5-6-7-8) (Blackleg fungus).